The primary structure comprises 79 residues: Small ribosomal subunit protein uS17 (79 aa).

Belongs to the universal ribosomal protein uS17 family. As to quaternary structure, part of the 30S ribosomal subunit.

In terms of biological role, one of the primary rRNA binding proteins, it binds specifically to the 5'-end of 16S ribosomal RNA. This chain is Small ribosomal subunit protein uS17, found in Bartonella henselae (strain ATCC 49882 / DSM 28221 / CCUG 30454 / Houston 1) (Rochalimaea henselae).